The sequence spans 505 residues: Tyrosine-protein kinase isoform SRK1 (505 aa).

Composition is skewed to polar residues over residues 1–10 (MGSCCSSQDG) and 18–31 (AGSTVDSHELSQSV). A disordered region spans residues 1–53 (MGSCCSSQDGDGNGKATAGSTVDSHELSQSVKGKIKQPEPKPKPPPQVPPAQD). Positions 54–116 (VKYPIYVGKY…PSNYVAEYKS (63 aa)) constitute an SH3 domain. The 93-residue stretch at 122–214 (WFLGKIKRVE…GLCCKLLYPC (93 aa)) folds into the SH2 domain. A Protein kinase domain is found at 240–493 (IKLLRRLGAG…TLQWQLEEFF (254 aa)). ATP contacts are provided by residues 246 to 254 (LGAGQFGEV) and K268. D359 (proton acceptor) is an active-site residue.

Belongs to the protein kinase superfamily. Tyr protein kinase family. SRC subfamily.

Its subcellular location is the cytoplasm. It catalyses the reaction L-tyrosyl-[protein] + ATP = O-phospho-L-tyrosyl-[protein] + ADP + H(+). In Spongilla lacustris (Freshwater sponge), this protein is Tyrosine-protein kinase isoform SRK1 (SRK1).